A 545-amino-acid polypeptide reads, in one-letter code: E3 ubiquitin-protein ligase ipaH9.8 (545 aa).

The segment at 1 to 242 is interaction with target proteins; that stretch reads MLPINNNFSL…YHGPRIYFSM (242 aa). LRR repeat units lie at residues 57 to 77, 78 to 99, 100 to 117, 118 to 139, 140 to 157, 158 to 179, 182 to 203, and 205 to 228; these read NSDE…NLPA, QITL…PVTL, KKLY…VLPP, ALES…PDSL, LTMN…SLPQ, ALKN…SEGN, VVRE…ILNL, and NECS…QRLT. The interval 243 to 250 is linker; sequence SDGQQNTL. The E3 ubiquitin-protein ligase catalytic domain stretch occupies residues 251–545; sequence HRPLADAVTA…SENGSQLHHS (295 aa). The NEL domain maps to 253–545; that stretch reads PLADAVTAWF…SENGSQLHHS (293 aa). C337 acts as the Glycyl thioester intermediate in catalysis.

The protein belongs to the LRR-containing bacterial E3 ligase family. In terms of assembly, also interacts with human and mouse U2AF1 (U2AF35). Ubiquitinated in the presence of host E1 ubiquitin-activating enzyme, E2 ubiquitin-conjugating enzyme and ubiquitin.

Its subcellular location is the secreted. It localises to the host cytoplasm. The protein localises to the host nucleus. It carries out the reaction S-ubiquitinyl-[E2 ubiquitin-conjugating enzyme]-L-cysteine + [acceptor protein]-L-lysine = [E2 ubiquitin-conjugating enzyme]-L-cysteine + N(6)-ubiquitinyl-[acceptor protein]-L-lysine.. Its activity is regulated as follows. Exists in an autoinhibited state in the absence of substrate protein, due to interactions of the leucine-rich repeats with NEL domain. Is activated upon binding to a substrate protein. In terms of biological role, effector E3 ubiquitin ligase that interferes with host's ubiquitination pathway and modulates the acute inflammatory responses, thus facilitating bacterial colonization within the host cell. Interacts with IKBKG (NEMO) and TNIP1 (ABIN-1), a ubiquitin-binding adapter protein, which results in TNIP1-dependent 'Lys-27'-linked polyubiquitination of IKBKG. Consequently, polyubiquitinated IKBKG undergoes proteasome-dependent degradation, which perturbs NF-kappa-B activation during bacterial infection. Mediates polyubiquitination of host U2AF1, leading to its proteasomal degradation. Catalyzes 'Lys-48'-linked polyubiquitination and subsequent degradation of a subset of host guanylate-binding proteins (GBP1, GBP2, GBP4 and GBP6), thereby suppressing host cell defense. In contrast, host GBP3 and GBP7 are not ubiquitinated by IpaH9.8. Uses UBE2D2 (UBCH5B) as an E2 ubiquitin-conjugating enzyme. The sequence is that of E3 ubiquitin-protein ligase ipaH9.8 (ipaH9.8) from Shigella dysenteriae serotype 1 (strain Sd197).